The primary structure comprises 139 residues: Large ribosomal subunit protein eL34 (139 aa).

Positions 113-139 (VSKPPKIAKAPAAAAAAKPAKTATKSK) are disordered.

It belongs to the eukaryotic ribosomal protein eL34 family.

This Ochlerotatus triseriatus (Eastern treehole mosquito) protein is Large ribosomal subunit protein eL34 (RpL34).